The primary structure comprises 132 residues: Agouti-signaling protein (132 aa).

Positions M1–S22 are cleaved as a signal peptide. Residue N39 is glycosylated (N-linked (GlcNAc...) asparagine). Residues I62–C93 form a disordered region. Basic and acidic residues predominate over residues R64–K79. 5 disulfides stabilise this stretch: C93–C108, C100–C114, C107–C125, C111–C132, and C116–C123. The Agouti domain maps to C93–C132.

The protein localises to the secreted. In terms of biological role, involved in the regulation of melanogenesis. The binding of ASP to MC1R precludes alpha-MSH initiated signaling and thus blocks production of cAMP, leading to a down-regulation of eumelanogenesis (brown/black pigment) and thus increasing synthesis of pheomelanin (yellow/red pigment). The chain is Agouti-signaling protein (ASIP) from Leontopithecus chrysomelas (Golden-headed lion tamarin).